A 102-amino-acid polypeptide reads, in one-letter code: Protein GOLVEN 4 (102 aa).

An N-terminal signal peptide occupies residues 1–27 (MEMKKWSYANLITLALLFLFFIILLLA). The propeptide occupies 28–89 (FQGGSRDDDH…QEREVYVELR (62 aa)). Positions 56 to 78 (KSLKPINPTKKNGFEYPDQGSHD) are disordered. A Sulfotyrosine modification is found at Tyr-91. Pro-99 is modified (hydroxyproline).

The protein belongs to the RGF family. In terms of assembly, binds to LRR receptor-like serine/threonine-protein kinases to trigger their dimerization with SERK proteins and subsequent signaling. In terms of tissue distribution, expressed in roots and sepals.

The protein resides in the secreted. Signaling peptide (root growth factor) that promotes root hairs formation and growth. Maintains the postembryonic root stem cell niche. Regulates the pattern of root growth and lateral root development by modulating the length and the number of cortical cells in the root apical meristem (RAM), and the anticlinal asymmetric cell divisions in lateral root initiation cells. In Arabidopsis thaliana (Mouse-ear cress), this protein is Protein GOLVEN 4.